We begin with the raw amino-acid sequence, 305 residues long: Sulfate adenylyltransferase subunit 2 1 (305 aa).

The disordered stretch occupies residues 283–305 (RSGRAIDHDQAGSMERKKREGYF).

This sequence belongs to the PAPS reductase family. CysD subfamily. As to quaternary structure, heterodimer composed of CysD, the smaller subunit, and CysN.

It carries out the reaction sulfate + ATP + H(+) = adenosine 5'-phosphosulfate + diphosphate. The protein operates within sulfur metabolism; hydrogen sulfide biosynthesis; sulfite from sulfate: step 1/3. With CysN forms the ATP sulfurylase (ATPS) that catalyzes the adenylation of sulfate producing adenosine 5'-phosphosulfate (APS) and diphosphate, the first enzymatic step in sulfur assimilation pathway. APS synthesis involves the formation of a high-energy phosphoric-sulfuric acid anhydride bond driven by GTP hydrolysis by CysN coupled to ATP hydrolysis by CysD. This Chromohalobacter salexigens (strain ATCC BAA-138 / DSM 3043 / CIP 106854 / NCIMB 13768 / 1H11) protein is Sulfate adenylyltransferase subunit 2 1.